Consider the following 408-residue polypeptide: Arginine deiminase (408 aa).

Cys-397 acts as the Amidino-cysteine intermediate in catalysis.

Belongs to the arginine deiminase family.

The protein localises to the cytoplasm. The catalysed reaction is L-arginine + H2O = L-citrulline + NH4(+). The protein operates within amino-acid degradation; L-arginine degradation via ADI pathway; carbamoyl phosphate from L-arginine: step 1/2. The protein is Arginine deiminase of Listeria innocua serovar 6a (strain ATCC BAA-680 / CLIP 11262).